Here is a 580-residue protein sequence, read N- to C-terminus: Sensor histidine kinase YvrG (580 aa).

At 1-6 (MRLRWK) the chain is on the cytoplasmic side. A helical membrane pass occupies residues 7 to 27 (FLFHFFGQMLIVILLLTVMLV). The Extracellular segment spans residues 28–261 (ASFFYLDARF…KSFLKVVLKA (234 aa)). A helical transmembrane segment spans residues 262-282 (MFLVMAVLFMYIIWMTVWYMF). Over 283 to 580 (RFGLPIFHTI…TVITILFKKQ (298 aa)) the chain is Cytoplasmic. The 218-residue stretch at 363 to 580 (GLSHDLKTPL…TVITILFKKQ (218 aa)) folds into the Histidine kinase domain. His366 bears the Phosphohistidine; by autocatalysis mark.

The protein localises to the cell membrane. The enzyme catalyses ATP + protein L-histidine = ADP + protein N-phospho-L-histidine.. In terms of biological role, member of the two-component regulatory system YvrG/YvrH that positively regulates 7 transcriptional units (wprA, wapA-yxxG, dltABCDE, sunA, sunT-bdbA-yolJ-bdbB, sigO-rsoA, and sigX-rsiX), and negatively regulates the lytABC operon. Probably activates YvrH by phosphorylation. This chain is Sensor histidine kinase YvrG (yvrG), found in Bacillus subtilis (strain 168).